A 167-amino-acid chain; its full sequence is NADH-ubiquinone oxidoreductase chain 6 (167 aa).

4 helical membrane passes run 21 to 41 (SPYY…LLLL), 45 to 65 (IIFP…VVFI), 78 to 98 (PINL…ITMI), and 132 to 152 (SMFI…LEVV).

Belongs to the complex I subunit 6 family.

It is found in the mitochondrion membrane. The enzyme catalyses a ubiquinone + NADH + 5 H(+)(in) = a ubiquinol + NAD(+) + 4 H(+)(out). Functionally, core subunit of the mitochondrial membrane respiratory chain NADH dehydrogenase (Complex I) that is believed to belong to the minimal assembly required for catalysis. Complex I functions in the transfer of electrons from NADH to the respiratory chain. The immediate electron acceptor for the enzyme is believed to be ubiquinone. This is NADH-ubiquinone oxidoreductase chain 6 (ND6) from Branchiostoma floridae (Florida lancelet).